A 224-amino-acid polypeptide reads, in one-letter code: N-(5'-phosphoribosyl)anthranilate isomerase (224 aa).

It belongs to the TrpF family.

The catalysed reaction is N-(5-phospho-beta-D-ribosyl)anthranilate = 1-(2-carboxyphenylamino)-1-deoxy-D-ribulose 5-phosphate. It functions in the pathway amino-acid biosynthesis; L-tryptophan biosynthesis; L-tryptophan from chorismate: step 3/5. This is N-(5'-phosphoribosyl)anthranilate isomerase from Sinorhizobium fredii (strain NBRC 101917 / NGR234).